Consider the following 968-residue polypeptide: MPFTLGQRWISDTESELGLGTVVALDARMVTIMFPATGENRLYARNDSPVTRVMFNPGDTVTSHEGWQLKIEDVKEENGLLAYTGTRLDTDEADVMLREVMLDSRLVFSKPQDRLFAGQIDRMDRFSLRYRARKFQSEQYRMPWSGLRGQRTSLIPHQLNIAHDVGRRHAPRVLLADEVGLGKTIEAGMILHQQLLSGAAERVLIVVPETLQHQWLVEMLRRFNLRFSLFDDERYAEAQHDADNPFETEQLVICSLDFVRRSKQRLEHLCDAEWDLLVVDEAHHLVWSENAPSREYMAIEQLAERVPGILLLTATPEQLGLESHFARLRLLDPNRFHDFDVFVEEQQNYRPVADAVAMLLAGKHLSNDELNTLSDLIGEQDIEPLLHTANSDRDGADAARQELVSMLMDRHGTSRVLFRNTRNGVKGFPKRELHTIKLPLPTQYQTAIKVSGIMGARKSAEERARDMLYPEQIYQEFEGDTGTWWNFDPRVEWLMGYLTAHRSQKVLVICAKAATALQLEQVLREREGIRAAVFHEGMSIIERDRAAAWFGEEDSGAQVLLCSEIGSEGRNFQFASKLVMFDLPFNPDLLEQRIGRLDRIGQAHDIQIHVPYLENTAQSVLVRWFHEGLDAFEHTCPTGRTIYDQVHSDLIGYLASPENTDGFDDLIKTCREKHDALKIQLEQGRDRLLEIHSNGGEKAQALAESIEEQDDDTSLISFAMNLFDIVGINQDDRGENMIVLTPSDHMLVPDFPGLPEDGCTITFERDVALSREDAQFITWEHPLIRNGLDLILSGDTGSSTISLLKNKALPVGTLLLELIYVVEAQAPKQLQLNRFLPATPVRLMLDKNGTNLAAQVEFESFNRQLSAVNRHTGSKLVNAVQQDVHAILQQGEAQIEKAARALIDSARREADEKLSAELSRLEALRAVNPNIRDDELAAIESNRQQVLESLDQASWRLDALRLIVVTHQ.

Residues 164 to 334 (DVGRRHAPRV…FARLRLLDPN (171 aa)) enclose the Helicase ATP-binding domain. 177-184 (DEVGLGKT) lines the ATP pocket. The short motif at 280-283 (DEAH) is the DEAH box element. A Helicase C-terminal domain is found at 490 to 644 (RVEWLMGYLT…TCPTGRTIYD (155 aa)).

This sequence belongs to the SNF2/RAD54 helicase family. RapA subfamily. Interacts with the RNAP. Has a higher affinity for the core RNAP than for the holoenzyme. Its ATPase activity is stimulated by binding to RNAP.

Functionally, transcription regulator that activates transcription by stimulating RNA polymerase (RNAP) recycling in case of stress conditions such as supercoiled DNA or high salt concentrations. Probably acts by releasing the RNAP, when it is trapped or immobilized on tightly supercoiled DNA. Does not activate transcription on linear DNA. Probably not involved in DNA repair. In Enterobacter sp. (strain 638), this protein is RNA polymerase-associated protein RapA.